The chain runs to 198 residues: MGLEAFLPVALVIGYLLGSIPFGLVLTRLAGTQDIRSIGSGSIGATNVLRTGRKSLAAGTLLLDALKGTVAVVIAGYIAGPNAAMAAGLGAFLGHLFPVWLKFKGGKGVAVYIGILLGLFWPAAVVFCLLWLATAFTTRYSSLSALVASFITPMFLWWFGHLALSALFAVLTLLLFYAHRENIKRLQSGKESRIGEKA.

Transmembrane regions (helical) follow at residues 6-26 (FLPV…GLVL), 56-78 (LAAG…AGYI), 83-101 (AAMA…PVWL), 113-133 (IGIL…LWLA), and 155-175 (FLWW…TLLL).

This sequence belongs to the PlsY family. Probably interacts with PlsX.

It localises to the cell inner membrane. The enzyme catalyses an acyl phosphate + sn-glycerol 3-phosphate = a 1-acyl-sn-glycero-3-phosphate + phosphate. It functions in the pathway lipid metabolism; phospholipid metabolism. Functionally, catalyzes the transfer of an acyl group from acyl-phosphate (acyl-PO(4)) to glycerol-3-phosphate (G3P) to form lysophosphatidic acid (LPA). This enzyme utilizes acyl-phosphate as fatty acyl donor, but not acyl-CoA or acyl-ACP. In Bradyrhizobium diazoefficiens (strain JCM 10833 / BCRC 13528 / IAM 13628 / NBRC 14792 / USDA 110), this protein is Glycerol-3-phosphate acyltransferase.